The primary structure comprises 173 residues: Small ribosomal subunit protein uS11m (173 aa).

The protein belongs to the universal ribosomal protein uS11 family.

It is found in the mitochondrion. The chain is Small ribosomal subunit protein uS11m (RPS11) from Acanthamoeba castellanii (Amoeba).